The primary structure comprises 333 residues: Chlorophyllide reductase 35.5 kDa chain (333 aa).

A disordered region spans residues 1 to 22 (MTDAPNLKGFDARLREEAAEEP). ATP contacts are provided by residues 45–50 (GSGKSF) and Lys74. Mg(2+) is bound at residue Ser49. [4Fe-4S] cluster contacts are provided by Cys130 and Cys165. ATP is bound at residue 219–220 (NK).

This sequence belongs to the NifH/BchL/ChlL family. Homodimer. Chlorophyllide reductase is composed of three subunits; BchX, BchY and BchZ. [4Fe-4S] cluster is required as a cofactor.

It carries out the reaction 3-deacetyl-3-vinylbacteriochlorophyllide a + 2 oxidized [2Fe-2S]-[ferredoxin] + ADP + phosphate = chlorophyllide a + 2 reduced [2Fe-2S]-[ferredoxin] + ATP + H2O + H(+). The catalysed reaction is bacteriochlorophyllide a + 2 oxidized [2Fe-2S]-[ferredoxin] + ADP + phosphate = 3-acetyl-3-devinylchlorophyllide a + 2 reduced [2Fe-2S]-[ferredoxin] + ATP + H2O + H(+). The enzyme catalyses 3-deacetyl-3-(1-hydroxyethyl)bacteriochlorophyllide a + 2 oxidized [2Fe-2S]-[ferredoxin] + ADP + phosphate = 3-devinyl-3-(1-hydroxyethyl)chlorophyllide a + 2 reduced [2Fe-2S]-[ferredoxin] + ATP + H2O + H(+). The protein operates within porphyrin-containing compound metabolism; bacteriochlorophyll biosynthesis. In terms of biological role, converts chlorophylls (Chl) into bacteriochlorophylls (BChl) by reducing ring B of the tetrapyrrole. The chain is Chlorophyllide reductase 35.5 kDa chain (bchX) from Rhodobacter capsulatus (strain ATCC BAA-309 / NBRC 16581 / SB1003).